The following is a 101-amino-acid chain: NADH-quinone oxidoreductase subunit K (101 aa).

The next 3 membrane-spanning stretches (helical) occupy residues 4-24 (LTHY…GIFM), 30-50 (LVLL…FIAF), and 61-81 (IFVF…LAIM).

The protein belongs to the complex I subunit 4L family. As to quaternary structure, NDH-1 is composed of 14 different subunits. Subunits NuoA, H, J, K, L, M, N constitute the membrane sector of the complex.

The protein localises to the cell inner membrane. It carries out the reaction a quinone + NADH + 5 H(+)(in) = a quinol + NAD(+) + 4 H(+)(out). Functionally, NDH-1 shuttles electrons from NADH, via FMN and iron-sulfur (Fe-S) centers, to quinones in the respiratory chain. The immediate electron acceptor for the enzyme in this species is believed to be ubiquinone. Couples the redox reaction to proton translocation (for every two electrons transferred, four hydrogen ions are translocated across the cytoplasmic membrane), and thus conserves the redox energy in a proton gradient. The polypeptide is NADH-quinone oxidoreductase subunit K (Neisseria meningitidis serogroup B (strain ATCC BAA-335 / MC58)).